The chain runs to 623 residues: Ciliated left-right organizer metallopeptidase (623 aa).

The N-terminal stretch at M1 to G20 is a signal peptide. The Extracellular segment spans residues K21–S578. A Zn(2+)-binding site is contributed by H249. E250 is an active-site residue. Zn(2+) contacts are provided by H253 and H326. The helical transmembrane segment at L579–Y599 threads the bilayer. Residues R600–N623 lie on the Cytoplasmic side of the membrane.

This sequence belongs to the peptidase M8 family. Zn(2+) is required as a cofactor. As to expression, expressed specifically in dorsal forerunner cells (DFCs) that form a ciliated Kupffer's vesicle later.

The protein localises to the membrane. Its function is as follows. Plays an essential role for patterning the left-right axis. Requires solely on the left side, downstream of the leftward flow, but upstream of dand5, a nodal inhibitor involved in left-right patterning. In Danio rerio (Zebrafish), this protein is Ciliated left-right organizer metallopeptidase (cirop).